Reading from the N-terminus, the 296-residue chain is tRNA dimethylallyltransferase (296 aa).

An ATP-binding site is contributed by 9–16; it reads GPTAVGKT. 11–16 contributes to the substrate binding site; the sequence is TAVGKT. The interaction with substrate tRNA stretch occupies residues 34–37; the sequence is DSRQ.

It belongs to the IPP transferase family. Monomer. Mg(2+) is required as a cofactor.

It carries out the reaction adenosine(37) in tRNA + dimethylallyl diphosphate = N(6)-dimethylallyladenosine(37) in tRNA + diphosphate. Functionally, catalyzes the transfer of a dimethylallyl group onto the adenine at position 37 in tRNAs that read codons beginning with uridine, leading to the formation of N6-(dimethylallyl)adenosine (i(6)A). In Chloroflexus aurantiacus (strain ATCC 29366 / DSM 635 / J-10-fl), this protein is tRNA dimethylallyltransferase.